Here is a 478-residue protein sequence, read N- to C-terminus: Protein nucleotidyltransferase YdiU (478 aa).

ATP is bound by residues Gly84, Gly86, Arg87, Lys107, Asp119, Gly120, Arg170, and Arg177. The Proton acceptor role is filled by Asp246. Asn247 and Asp256 together coordinate Mg(2+). Asp256 is a binding site for ATP.

The protein belongs to the SELO family. Mg(2+) is required as a cofactor. The cofactor is Mn(2+).

The catalysed reaction is L-seryl-[protein] + ATP = 3-O-(5'-adenylyl)-L-seryl-[protein] + diphosphate. The enzyme catalyses L-threonyl-[protein] + ATP = 3-O-(5'-adenylyl)-L-threonyl-[protein] + diphosphate. It catalyses the reaction L-tyrosyl-[protein] + ATP = O-(5'-adenylyl)-L-tyrosyl-[protein] + diphosphate. It carries out the reaction L-histidyl-[protein] + UTP = N(tele)-(5'-uridylyl)-L-histidyl-[protein] + diphosphate. The catalysed reaction is L-seryl-[protein] + UTP = O-(5'-uridylyl)-L-seryl-[protein] + diphosphate. The enzyme catalyses L-tyrosyl-[protein] + UTP = O-(5'-uridylyl)-L-tyrosyl-[protein] + diphosphate. Functionally, nucleotidyltransferase involved in the post-translational modification of proteins. It can catalyze the addition of adenosine monophosphate (AMP) or uridine monophosphate (UMP) to a protein, resulting in modifications known as AMPylation and UMPylation. This chain is Protein nucleotidyltransferase YdiU, found in Escherichia coli O81 (strain ED1a).